The primary structure comprises 277 residues: MENTENSVDSKSIKSLEPKIIHGSKSVDSGISLDNSYKMDYPEMGLCIIINNKNFHKSTGMASRSGTDVDAANLRETFINLKYGVRNKNDLTREEIVELMRNVSKEDHSKRSSFVCVLLSHGEEGIIFGTNGPLDLKKITSFFRGDCCRSLTGKPKLFIIQACRGTELDCGIEADSGVEDDMACHKIPVEADFLYAYSTAPGYYSWRNSKDGSWFIQSLCAMLKQYADKLEFMHILTRVNRKVATEFESFSLDATFHAKKQIPCIVSMLTKELYFYH.

An N-acetylmethionine modification is found at methionine 1. 2 consecutive propeptides follow at residues 1-9 and 10-28; these read MENTENSVD and SKSIKSLEPKIIHGSKSVD. Lysine 11 is modified (N6-acetyllysine). Serine 26 carries the post-translational modification Phosphoserine. Active-site residues include histidine 121 and cysteine 163. Cysteine 163 bears the S-nitrosocysteine; in inhibited form mark.

This sequence belongs to the peptidase C14A family. In terms of assembly, heterotetramer that consists of two anti-parallel arranged heterodimers, each one formed by a 17 kDa (p17) and a 12 kDa (p12) subunit. Interacts with BIRC6/bruce. In terms of processing, cleavage by granzyme B, caspase-6, caspase-8 and caspase-10 generates the two active subunits. Additional processing of the propeptides is likely due to the autocatalytic activity of the activated protease. Active heterodimers between the small subunit of caspase-7 protease and the large subunit of caspase-3 also occur and vice versa. S-nitrosylated on its catalytic site cysteine in unstimulated cell lines and denitrosylated upon activation of the Fas apoptotic pathway, associated with an increase in intracellular caspase activity. Fas therefore activates caspase-3 not only by inducing the cleavage of the caspase zymogen to its active subunits, but also by stimulating the denitrosylation of its active site thiol. Post-translationally, ubiquitinated by BIRC6; this activity is inhibited by DIABLO/SMAC.

Its subcellular location is the cytoplasm. The catalysed reaction is Strict requirement for an Asp residue at positions P1 and P4. It has a preferred cleavage sequence of Asp-Xaa-Xaa-Asp-|- with a hydrophobic amino-acid residue at P2 and a hydrophilic amino-acid residue at P3, although Val or Ala are also accepted at this position.. With respect to regulation, inhibited by BIRC6; following inhibition of BIRC6-caspase binding by DIABLO/SMAC, BIRC6 is subjected to caspase cleavage, leading to an increase in active caspases. Its function is as follows. Involved in the activation cascade of caspases responsible for apoptosis execution. At the onset of apoptosis, it proteolytically cleaves poly(ADP-ribose) polymerase PARP1 at a '216-Asp-|-Gly-217' bond. Cleaves and activates sterol regulatory element binding proteins (SREBPs) between the basic helix-loop-helix leucine zipper domain and the membrane attachment domain. Cleaves and activates caspase-6, -7 and -9 (CASP6, CASP7 and CASP9, respectively). Cleaves and inactivates interleukin-18 (IL18). Triggers cell adhesion in sympathetic neurons through RET cleavage. Cleaves IL-1 beta between an Asp and an Ala, releasing the mature cytokine which is involved in a variety of inflammatory processes. Cleaves and inhibits serine/threonine-protein kinase AKT1 in response to oxidative stress. Acts as an inhibitor of type I interferon production during virus-induced apoptosis by mediating cleavage of antiviral proteins CGAS, IRF3 and MAVS, thereby preventing cytokine overproduction. Also involved in pyroptosis by mediating cleavage and activation of gasdermin-E (GSDME). Cleaves XRCC4 and phospholipid scramblase proteins XKR4, XKR8 and XKR9, leading to promote phosphatidylserine exposure on apoptotic cell surface. Cleaves BIRC6 following inhibition of BIRC6-caspase binding by DIABLO/SMAC. This is Caspase-3 (CASP3) from Macaca fascicularis (Crab-eating macaque).